Reading from the N-terminus, the 432-residue chain is Adenylosuccinate synthetase (432 aa).

GTP-binding positions include 13 to 19 (GDEGKGK) and 41 to 43 (GHT). The active-site Proton acceptor is the D14. Residues D14 and G41 each contribute to the Mg(2+) site. Residues 14 to 17 (DEGK), 39 to 42 (NAGH), T130, R144, Q225, T240, and R304 each bind IMP. The Proton donor role is filled by H42. A substrate-binding site is contributed by 300 to 306 (ATTGRRR). GTP-binding positions include R306, 332-334 (KLD), and 415-417 (STG).

The protein belongs to the adenylosuccinate synthetase family. As to quaternary structure, homodimer. Mg(2+) serves as cofactor.

The protein resides in the cytoplasm. It catalyses the reaction IMP + L-aspartate + GTP = N(6)-(1,2-dicarboxyethyl)-AMP + GDP + phosphate + 2 H(+). The protein operates within purine metabolism; AMP biosynthesis via de novo pathway; AMP from IMP: step 1/2. Functionally, plays an important role in the de novo pathway of purine nucleotide biosynthesis. Catalyzes the first committed step in the biosynthesis of AMP from IMP. This chain is Adenylosuccinate synthetase, found in Citrobacter koseri (strain ATCC BAA-895 / CDC 4225-83 / SGSC4696).